Here is a 485-residue protein sequence, read N- to C-terminus: ATP synthase subunit beta (485 aa).

Residues 1–11 are compositionally biased toward basic and acidic residues; sequence MPATETADKNT. The disordered stretch occupies residues 1-20; sequence MPATETADKNTKSANSDTSG. Position 170 to 177 (170 to 177) interacts with ATP; that stretch reads GGAGVGKT.

The protein belongs to the ATPase alpha/beta chains family. F-type ATPases have 2 components, CF(1) - the catalytic core - and CF(0) - the membrane proton channel. CF(1) has five subunits: alpha(3), beta(3), gamma(1), delta(1), epsilon(1). CF(0) has three main subunits: a(1), b(2) and c(9-12). The alpha and beta chains form an alternating ring which encloses part of the gamma chain. CF(1) is attached to CF(0) by a central stalk formed by the gamma and epsilon chains, while a peripheral stalk is formed by the delta and b chains.

It is found in the cell membrane. It carries out the reaction ATP + H2O + 4 H(+)(in) = ADP + phosphate + 5 H(+)(out). Produces ATP from ADP in the presence of a proton gradient across the membrane. The catalytic sites are hosted primarily by the beta subunits. This is ATP synthase subunit beta from Mycolicibacterium paratuberculosis (strain ATCC BAA-968 / K-10) (Mycobacterium paratuberculosis).